The sequence spans 288 residues: Probable prolyl 4-hydroxylase 6 (288 aa).

The Cytoplasmic portion of the chain corresponds to 1 to 4 (MDSQ). The chain crosses the membrane as a helical; Signal-anchor for type II membrane protein span at residues 5–27 (YFLAFSLSLLLIFSQISSFSFSV). Topologically, residues 28–288 (DPTRITQLSW…GFCRKSCKAC (261 aa)) are lumenal. In terms of domain architecture, Fe2OG dioxygenase spans 116 to 238 (NGEALQILHY…KWSATRWIHV (123 aa)). Fe cation is bound by residues H134 and D136. N160 and N210 each carry an N-linked (GlcNAc...) asparagine glycan. Residue H219 coordinates Fe cation. 2-oxoglutarate is bound at residue K229. The ShKT domain occupies 248–288 (CVDDHESCQEWADAGECEKNPMYMVGSETSLGFCRKSCKAC). Intrachain disulfides connect C248–C288, C255–C281, and C264–C285.

Belongs to the P4HA family. Fe(2+) is required as a cofactor. L-ascorbate serves as cofactor.

It is found in the endoplasmic reticulum membrane. It carries out the reaction L-prolyl-[collagen] + 2-oxoglutarate + O2 = trans-4-hydroxy-L-prolyl-[collagen] + succinate + CO2. Its function is as follows. Catalyzes the post-translational formation of 4-hydroxyproline in -Xaa-Pro-Gly- sequences in proline-rich peptide sequences of plant glycoproteins and other proteins. Hydroxyprolines are important constituent of many plant cell wall glycoproteins such as extensins, hydroxyproline-rich glycoproteins, lectins and arabinogalactan proteins. The polypeptide is Probable prolyl 4-hydroxylase 6 (Arabidopsis thaliana (Mouse-ear cress)).